Reading from the N-terminus, the 297-residue chain is MKSKSSRTRVAILGSGSIGLDLMFKVKASEQFDLKFVVGRNANSDGLRLARSCNVETSSDGLDFLKAHEDAYDLVFDATSAAAHKVNNRFFSDAGKFVIDLTPAKVGRLCVPCINLDDMGAEQNVNLITCGGQASLPLAYALKQAVDEIDYLEVVSAIASRSAGIATRENIDEYMTTTEYALAKFSGAKKTKAILNINPAEPGVRMQTTLYAYARYRDFDRVRASVADMVEKVREYVPGYRLVVEPLESQGRITIGLTVRGRGDYLPEYAGNLDIINCAALAVASHRHATARLGATQ.

15-18 provides a ligand contact to NAD(+); it reads SGSI. Cys-130 functions as the Acyl-thioester intermediate in the catalytic mechanism. NAD(+)-binding positions include 162–170 and Asn-272; that span reads SAGIATREN.

Belongs to the acetaldehyde dehydrogenase family.

It catalyses the reaction acetaldehyde + NAD(+) + CoA = acetyl-CoA + NADH + H(+). This Burkholderia pseudomallei (strain 1106a) protein is Acetaldehyde dehydrogenase.